A 120-amino-acid chain; its full sequence is Large ribosomal subunit protein uL18 (120 aa).

This sequence belongs to the universal ribosomal protein uL18 family. As to quaternary structure, part of the 50S ribosomal subunit; part of the 5S rRNA/L5/L18/L25 subcomplex. Contacts the 5S and 23S rRNAs.

Its function is as follows. This is one of the proteins that bind and probably mediate the attachment of the 5S RNA into the large ribosomal subunit, where it forms part of the central protuberance. In Bartonella henselae (strain ATCC 49882 / DSM 28221 / CCUG 30454 / Houston 1) (Rochalimaea henselae), this protein is Large ribosomal subunit protein uL18.